Reading from the N-terminus, the 158-residue chain is Extracellular giant hemoglobin major globin subunit A2 (158 aa).

The first 16 residues, 1–16 (MKSLIVFACLVAYAAA), serve as a signal peptide directing secretion. The region spanning 17-158 (DCTSLNRLLV…MNQIVSGISG (142 aa)) is the Globin domain. A disulfide bridge links Cys-18 with Cys-148. Cys-89 contributes to the hydrogen sulfide binding site. A heme b-binding site is contributed by His-110.

This sequence belongs to the globin family. The 400 kDa hemoglobin consists of a spherical 24-mer arranged as a double layer of dome-shaped dodecamers. Each dodecamer is composed of the 3-fold trimer of the tetramer A1-A2-B1-B2 having one intra-tetramer (A1-B2) disulfide bond and one inter-tetramer (B1-B2) disulfide bond per tetramer.

The protein resides in the secreted. Its function is as follows. The extracellular giant hemoglobin is able to bind and transport oxygen and hydrosulfide simultaneously and reversibly at two different sites. The protein is Extracellular giant hemoglobin major globin subunit A2 (ghbA2) of Oligobrachia mashikoi (Beard worm).